We begin with the raw amino-acid sequence, 307 residues long: Protoheme IX farnesyltransferase (307 aa).

9 consecutive transmembrane segments (helical) span residues 31 to 51 (VTQLAVFCAIIGMFLATPGMV), 53 to 73 (WPVLIGGAAGIWLLAGAAFAI), 103 to 123 (TLVFSAILGGAGMWLLHVYAN), 125 to 145 (LTMWLTFATFLGYAVVYTILL), 153 to 173 (IVIGGLSGAMPPALGWAAVAG), 179 to 199 (AWFLVLIIFTWTPPHFWALAL), 223 to 243 (LLHILLYTLIMIAATLLPFVY), 246 to 266 (SGYIYLAAALALGAGFLAYAW), and 285 to 305 (ILYLSLLFAALLVDHYFKFVP).

The protein belongs to the UbiA prenyltransferase family. Protoheme IX farnesyltransferase subfamily.

It localises to the cell inner membrane. It catalyses the reaction heme b + (2E,6E)-farnesyl diphosphate + H2O = Fe(II)-heme o + diphosphate. Its pathway is porphyrin-containing compound metabolism; heme O biosynthesis; heme O from protoheme: step 1/1. Its function is as follows. Converts heme B (protoheme IX) to heme O by substitution of the vinyl group on carbon 2 of heme B porphyrin ring with a hydroxyethyl farnesyl side group. The protein is Protoheme IX farnesyltransferase of Cupriavidus taiwanensis (strain DSM 17343 / BCRC 17206 / CCUG 44338 / CIP 107171 / LMG 19424 / R1) (Ralstonia taiwanensis (strain LMG 19424)).